The chain runs to 67 residues: Metallothionein-A (67 aa).

It belongs to the metallothionein superfamily. Type 4 family.

In terms of biological role, metallothioneins have a high content of cysteine residues that bind various heavy metals. This Sphaerechinus granularis (Purple sea urchin) protein is Metallothionein-A.